Here is a 686-residue protein sequence, read N- to C-terminus: MIRPLCSKIIISYIFAISQFLLAANAWSPTDSYVPGTVSCPDDINLVREATSISQNESAWLEKRNKVTSVALKDFLTRATANFSDSSEVLSKLFNDGNSENLPKIAVAVSGGGYRSMLTGAGVLAAMDNRTEGAYEHGLGGLLQSTTYLSGASGGNWLVGTLALNNWTSVQDILNNMQNDDSIWDLSDSIVTPGGINIFKTAKRWDHISNAVESKQNADYNTSLADIWGRALAYNFFPSLNRGGIGLTWSSIRDFPVFQNAEMPFPISVADGRYPGTKVINLNATVFEFNPFEMGSWDPSLNSFANVKYLGTNVSNGVPLERGKCTAGFDNAGFIMGTSSTLFNQFLLRINSTHLPSFITRLARHFLKDLSQDFNDIAVYSPNPFKDTKFLDSDYTTSIVDSDSLFLVDGGEDDENVPVLPLIQKERDVDIIFAVDNSADMRLAWPDGSSLVHTYERQFVKQGQGMSFPYVPDTNTFVNLGLNKKPTFFGCDANNLTDLQYIPPLVVYLPNAEYSFNSNQSAFKLSYSESQRRSMIQNGFEIATRNNFTDDPEFMGCVGCAIIRRKQQALNITLPPECETCFKNYCWNGTLDTTPLPDVEKDVHHSFINVNSFNSSIGQEESLYAGSSASQSSSSSSSSSSSSEIPSATATLEKKAATNSGSHLSGISVKFSAMIMLTLLMFTGAV.

The N-terminal stretch at 1 to 26 (MIRPLCSKIIISYIFAISQFLLAANA) is a signal peptide. One can recognise a PLA2c domain in the interval 39 to 592 (SCPDDINLVR…KNYCWNGTLD (554 aa)). 14 N-linked (GlcNAc...) asparagine glycosylation sites follow: Asn56, Asn82, Asn129, Asn166, Asn221, Asn283, Asn313, Asn351, Asn495, Asn519, Asn547, Asn571, Asn588, and Asn614. Asn659 is lipidated: GPI-anchor amidated asparagine. Residues 660 to 686 (SGSHLSGISVKFSAMIMLTLLMFTGAV) constitute a propeptide, removed in mature form.

It belongs to the lysophospholipase family.

Its subcellular location is the cell membrane. The catalysed reaction is a 1-acyl-sn-glycero-3-phosphocholine + H2O = sn-glycerol 3-phosphocholine + a fatty acid + H(+). Sequentially removes both fatty acyl groups from diacylglycerophospholipids and therefore has both phospholipase A and lysophospholipase activities. Substrate preference is phosphatidylserine &gt; phosphatidylinositol. Does not cleave phosphatidylcholine, phosphatidylethanolamine, phosphatidic acid and phosphatidylinositol-bisphosphate. Mainly responsible for the degradation of phosphatidylinositol in vivo. In Saccharomyces cerevisiae (strain ATCC 204508 / S288c) (Baker's yeast), this protein is Lysophospholipase 3 (PLB3).